The following is a 335-amino-acid chain: NADH-ubiquinone oxidoreductase chain 2 (335 aa).

Transmembrane regions (helical) follow at residues 7–27, 28–48, 58–78, 81–101, 110–130, 147–167, 174–194, 200–220, 240–260, 274–294, and 315–335; these read PTMA…VSSA, NWMF…PIMM, GAVK…MSST, WMTF…AIML, FWYP…LSSW, NMNF…VIGM, TIMA…AAVY, IMYF…MGYL, MALL…GFMP, IILL…LNII, and SLKF…FIML.

It belongs to the complex I subunit 2 family.

Its subcellular location is the mitochondrion inner membrane. The enzyme catalyses a ubiquinone + NADH + 5 H(+)(in) = a ubiquinol + NAD(+) + 4 H(+)(out). In terms of biological role, core subunit of the mitochondrial membrane respiratory chain NADH dehydrogenase (Complex I) that is believed to belong to the minimal assembly required for catalysis. Complex I functions in the transfer of electrons from NADH to the respiratory chain. The immediate electron acceptor for the enzyme is believed to be ubiquinone. This Lumbricus terrestris (Common earthworm) protein is NADH-ubiquinone oxidoreductase chain 2 (ND2).